The following is a 124-amino-acid chain: Small ribosomal subunit protein uS12 (124 aa).

Asp89 carries the post-translational modification 3-methylthioaspartic acid.

The protein belongs to the universal ribosomal protein uS12 family. As to quaternary structure, part of the 30S ribosomal subunit. Contacts proteins S8 and S17. May interact with IF1 in the 30S initiation complex.

Functionally, with S4 and S5 plays an important role in translational accuracy. Its function is as follows. Interacts with and stabilizes bases of the 16S rRNA that are involved in tRNA selection in the A site and with the mRNA backbone. Located at the interface of the 30S and 50S subunits, it traverses the body of the 30S subunit contacting proteins on the other side and probably holding the rRNA structure together. The combined cluster of proteins S8, S12 and S17 appears to hold together the shoulder and platform of the 30S subunit. In Shewanella amazonensis (strain ATCC BAA-1098 / SB2B), this protein is Small ribosomal subunit protein uS12.